The following is a 301-amino-acid chain: Ubiquitin thioesterase OTU1 (301 aa).

Residues 4–80 (KVTGAGINQV…TIESSDSNES (77 aa)) form a UBX-like region. Residues 109–229 (LSVHPVLDDN…GIHYDSLTMN (121 aa)) form the OTU domain. The interval 114–120 (VLDDNSC) is cys-loop. Aspartate 117 is an active-site residue. Cysteine 120 serves as the catalytic Nucleophile. Lysine 160 participates in a covalent cross-link: Glycyl lysine isopeptide (Lys-Gly) (interchain with G-Cter in ubiquitin). Residues 169–179 (ILKMESWGGAI) are variable-loop. The segment at 218–222 (FNGIH) is his-loop. Isoleucine 221 provides a ligand contact to substrate. Histidine 222 is a catalytic residue. Positions 243–248 (DDVLTA) are S2 site. The C2H2-type zinc finger occupies 270 to 294 (IKCNTCQMTFVGEREVARHAESTGH). The active site involves histidine 294.

Forms a complex composed of CDC48, NPL4, UFD1, DOA1, SHP1 and deubiquitinase OTU1; within the complex interacts with CDC48 and DOA1/UFD3.

The protein localises to the cytoplasm. It is found in the nucleus. The catalysed reaction is Thiol-dependent hydrolysis of ester, thioester, amide, peptide and isopeptide bonds formed by the C-terminal Gly of ubiquitin (a 76-residue protein attached to proteins as an intracellular targeting signal).. Functionally, hydrolase that can remove conjugated ubiquitin from proteins and may therefore play an important regulatory role at the level of protein turnover by preventing degradation. Participates in the regulation of the ubiquitin conjugation pathway involving CDC48 by hindering multiubiquitination of substrates at the CDC48 chaperone. May be indirectly involved in PIS1 gene expression. The protein is Ubiquitin thioesterase OTU1 (OTU1) of Saccharomyces cerevisiae (strain ATCC 204508 / S288c) (Baker's yeast).